Here is a 479-residue protein sequence, read N- to C-terminus: Sulfate adenylyltransferase subunit 1 (479 aa).

One can recognise a tr-type G domain in the interval 25-239; that stretch reads KSLLRFLTCG…EVLETVDIQR (215 aa). The segment at 34–41 is G1; the sequence is GSVDDGKS. GTP is bound at residue 34–41; that stretch reads GSVDDGKS. The segment at 92–96 is G2; that stretch reads GITID. The G3 stretch occupies residues 113–116; it reads DTPG. GTP contacts are provided by residues 113-117 and 168-171; these read DTPGH and NKMD. The tract at residues 168–171 is G4; the sequence is NKMD. The segment at 206-208 is G5; it reads SAL.

The protein belongs to the TRAFAC class translation factor GTPase superfamily. Classic translation factor GTPase family. CysN/NodQ subfamily. As to quaternary structure, heterodimer composed of CysD, the smaller subunit, and CysN.

It catalyses the reaction sulfate + ATP + H(+) = adenosine 5'-phosphosulfate + diphosphate. It functions in the pathway sulfur metabolism; hydrogen sulfide biosynthesis; sulfite from sulfate: step 1/3. With CysD forms the ATP sulfurylase (ATPS) that catalyzes the adenylation of sulfate producing adenosine 5'-phosphosulfate (APS) and diphosphate, the first enzymatic step in sulfur assimilation pathway. APS synthesis involves the formation of a high-energy phosphoric-sulfuric acid anhydride bond driven by GTP hydrolysis by CysN coupled to ATP hydrolysis by CysD. This Salmonella newport (strain SL254) protein is Sulfate adenylyltransferase subunit 1.